Reading from the N-terminus, the 202-residue chain is Succinate dehydrogenase cytochrome b558 subunit (202 aa).

The next 5 helical transmembrane spans lie at 12–31 (LHSLLGVIPVGIFLIQHLVV), 60–79 (IFIIFLPLIYHAVYGVYIAF), 93–113 (NWLFVLQRVTGIITLIFVSWH), 135–155 (ILSSPAMLGFYIVGVLSTIFH), and 178–196 (ISTYVTLIIFVALSYVGLK). Heme contacts are provided by histidine 28, histidine 70, histidine 113, and histidine 155.

This sequence belongs to the cytochrome b558 family. Part of an enzyme complex containing three subunits: a flavoprotein, an iron-sulfur protein and cytochrome b-558.

Its subcellular location is the cell membrane. Its pathway is carbohydrate metabolism; tricarboxylic acid cycle. Functionally, di-heme cytochrome of the succinate dehydrogenase complex. The protein is Succinate dehydrogenase cytochrome b558 subunit (sdhC) of Bacillus subtilis (strain 168).